The primary structure comprises 657 residues: UvrABC system protein B (657 aa).

In terms of domain architecture, Helicase ATP-binding spans 25 to 182; that stretch reads KSIKQGNEFQ…KKLIEIQYER (158 aa). Residue 38 to 45 participates in ATP binding; sequence GVTGSGKT. The Beta-hairpin motif lies at 91 to 114; the sequence is YYDYYQPEAYVPQTDTFIEKDASI. The region spanning 429 to 595 is the Helicase C-terminal domain; that stretch reads QIDDLYTEIQ…TINKEVRELI (167 aa). Residues 621-656 form the UVR domain; sequence KKLIKEYTDEMKLAAKNLQFERAAQLRDKIEELKGK.

It belongs to the UvrB family. In terms of assembly, forms a heterotetramer with UvrA during the search for lesions. Interacts with UvrC in an incision complex.

The protein localises to the cytoplasm. In terms of biological role, the UvrABC repair system catalyzes the recognition and processing of DNA lesions. A damage recognition complex composed of 2 UvrA and 2 UvrB subunits scans DNA for abnormalities. Upon binding of the UvrA(2)B(2) complex to a putative damaged site, the DNA wraps around one UvrB monomer. DNA wrap is dependent on ATP binding by UvrB and probably causes local melting of the DNA helix, facilitating insertion of UvrB beta-hairpin between the DNA strands. Then UvrB probes one DNA strand for the presence of a lesion. If a lesion is found the UvrA subunits dissociate and the UvrB-DNA preincision complex is formed. This complex is subsequently bound by UvrC and the second UvrB is released. If no lesion is found, the DNA wraps around the other UvrB subunit that will check the other stand for damage. In Clostridium botulinum (strain Eklund 17B / Type B), this protein is UvrABC system protein B.